The sequence spans 870 residues: MTKLTPMMRQYLDIKAQYPDAILFFRLGDFYEMFMEDAVTASRILDITLTSRNKGAAEEVPLCGIPYHSCQPYVARLVEAGHKVAICEQVEDPKTVKGIVKREVVRVVTPGLVVDADTLTPKENNFLAAIAVSAQERYGIAVLDITTGEFRVTEVEGREAACSEVVSLQPREILVSEDQQQFCEQLLQGASGSWLINPLPDWVCDLEACGQRLQSFFNCGSLESFGCARLPEAVRAAGGVVYYVEQTQKGVAGHIRPLVTYHSRDYMVLDNSTRRNLELTATLQDGGRKGSLLGVLDRTVTAMGGRKIRQWIHHPLVDLKAIRDRHLSVQELVGQSLVRGDLRADLDGVYDLERLNSKIAMGHANAKDLVALRKSFEKLPRILQHLDELSAPLAAGIGSRIDPLTDMAELIGRAIVEDPPFVLREGGLMCDGYHLELDELRDIRRNGKEWIAKLEADERERTGIGSLKVRFNKVFGYYIEVTRTHLGRVPEDYQRKQTLANAERFFTPQLKEYEEKVLGAEDRLFDLEFELFQDLRERVAEQGERVQRTAEALAELDVLLSLADVAHSCDYVCPTMDDSDRLVIRDGRHPVIEAMNLGEHFVPNDVEMDCRENQIMVITGPNMAGKSTYMRQVALITLMAHMGSLVPAASAHIGLVDRIFTRVGASDNLAQGQSTFMVEMTEAAHILNHATSRSLIVLDEIGRGTSTFDGISIAWAVAEYLHDNGHVAAKTLFATHYHELTDLILTCERVKNLNIAVREWNEQIIFLRKIVKGPASHSYGIQVARLAGLPVAVIDRAKEILVNLESGELAEEGQPRLAQRAGGGQHRPNPQMSLFDAAADPVREKLAALDISTISPLEGLNFLHELQKLV.

ATP is bound at residue 620-627; it reads GPNMAGKS.

It belongs to the DNA mismatch repair MutS family.

In terms of biological role, this protein is involved in the repair of mismatches in DNA. It is possible that it carries out the mismatch recognition step. This protein has a weak ATPase activity. In Syntrophotalea carbinolica (strain DSM 2380 / NBRC 103641 / GraBd1) (Pelobacter carbinolicus), this protein is DNA mismatch repair protein MutS.